We begin with the raw amino-acid sequence, 433 residues long: Serine hydroxymethyltransferase (433 aa).

(6S)-5,6,7,8-tetrahydrofolate contacts are provided by residues L132 and 136–138 (GHL). N6-(pyridoxal phosphate)lysine is present on K241.

Belongs to the SHMT family. As to quaternary structure, homodimer. Requires pyridoxal 5'-phosphate as cofactor.

The protein localises to the cytoplasm. The enzyme catalyses (6R)-5,10-methylene-5,6,7,8-tetrahydrofolate + glycine + H2O = (6S)-5,6,7,8-tetrahydrofolate + L-serine. Its pathway is one-carbon metabolism; tetrahydrofolate interconversion. It participates in amino-acid biosynthesis; glycine biosynthesis; glycine from L-serine: step 1/1. Catalyzes the reversible interconversion of serine and glycine with tetrahydrofolate (THF) serving as the one-carbon carrier. This reaction serves as the major source of one-carbon groups required for the biosynthesis of purines, thymidylate, methionine, and other important biomolecules. Also exhibits THF-independent aldolase activity toward beta-hydroxyamino acids, producing glycine and aldehydes, via a retro-aldol mechanism. This Rhodopseudomonas palustris (strain HaA2) protein is Serine hydroxymethyltransferase.